A 563-amino-acid polypeptide reads, in one-letter code: Arginine--tRNA ligase (563 aa).

The 'HIGH' region signature appears at 121–131; it reads PNIAKPFSIGH.

It belongs to the class-I aminoacyl-tRNA synthetase family. Monomer.

It localises to the cytoplasm. The catalysed reaction is tRNA(Arg) + L-arginine + ATP = L-arginyl-tRNA(Arg) + AMP + diphosphate. The chain is Arginine--tRNA ligase from Streptococcus agalactiae serotype III (strain NEM316).